Reading from the N-terminus, the 342-residue chain is D-erythrose-4-phosphate dehydrogenase (342 aa).

Residue 12–13 (RI) participates in NAD(+) binding. Residues 154 to 156 (SCT), arginine 200, 213 to 214 (TK), and arginine 236 contribute to the substrate site. The Nucleophile role is filled by cysteine 155. Asparagine 318 serves as a coordination point for NAD(+).

It belongs to the glyceraldehyde-3-phosphate dehydrogenase family. Epd subfamily. Homotetramer.

The protein resides in the cytoplasm. It catalyses the reaction D-erythrose 4-phosphate + NAD(+) + H2O = 4-phospho-D-erythronate + NADH + 2 H(+). It participates in cofactor biosynthesis; pyridoxine 5'-phosphate biosynthesis; pyridoxine 5'-phosphate from D-erythrose 4-phosphate: step 1/5. Its function is as follows. Catalyzes the NAD-dependent conversion of D-erythrose 4-phosphate to 4-phosphoerythronate. This chain is D-erythrose-4-phosphate dehydrogenase, found in Salmonella arizonae (strain ATCC BAA-731 / CDC346-86 / RSK2980).